The following is a 168-amino-acid chain: Ribulose bisphosphate carboxylase small subunit, chloroplastic (168 aa).

Residues 1–28 (MASIAAKSVSLRAATRRAAPVAAPADAR) constitute a chloroplast transit peptide.

Belongs to the RuBisCO small chain family. Heterohexadecamer of 8 large and 8 small subunits.

The protein localises to the plastid. Its subcellular location is the chloroplast. RuBisCO catalyzes two reactions: the carboxylation of D-ribulose 1,5-bisphosphate, the primary event in carbon dioxide fixation, as well as the oxidative fragmentation of the pentose substrate. Both reactions occur simultaneously and in competition at the same active site. Although the small subunit is not catalytic it is essential for maximal activity. The polypeptide is Ribulose bisphosphate carboxylase small subunit, chloroplastic (Chlamydomonas moewusii (Chlamydomonas eugametos)).